The sequence spans 361 residues: Uroporphyrinogen decarboxylase (361 aa).

Substrate contacts are provided by residues 44-48, Asp93, Tyr168, Ser223, and His337; that span reads RQAGR.

The protein belongs to the uroporphyrinogen decarboxylase family. Homodimer.

The protein resides in the cytoplasm. The enzyme catalyses uroporphyrinogen III + 4 H(+) = coproporphyrinogen III + 4 CO2. It participates in porphyrin-containing compound metabolism; protoporphyrin-IX biosynthesis; coproporphyrinogen-III from 5-aminolevulinate: step 4/4. Functionally, catalyzes the decarboxylation of four acetate groups of uroporphyrinogen-III to yield coproporphyrinogen-III. The protein is Uroporphyrinogen decarboxylase of Thermobifida fusca (strain YX).